Consider the following 185-residue polypeptide: Elongation factor P (185 aa).

Belongs to the elongation factor P family.

It is found in the cytoplasm. It participates in protein biosynthesis; polypeptide chain elongation. Involved in peptide bond synthesis. Stimulates efficient translation and peptide-bond synthesis on native or reconstituted 70S ribosomes in vitro. Probably functions indirectly by altering the affinity of the ribosome for aminoacyl-tRNA, thus increasing their reactivity as acceptors for peptidyl transferase. This Mesoplasma florum (strain ATCC 33453 / NBRC 100688 / NCTC 11704 / L1) (Acholeplasma florum) protein is Elongation factor P.